The primary structure comprises 430 residues: MQASIESTGNLERRLTFTLPQERLETHVGGRLRELARTTRIKGFRPGKVPTKVIEQRFGQQVRAEAMEGLLRETFDSAVREHSLRLAGNPRIDQGETDFDFVATFEVVPDFGDIDVTKLSVVRATAEVTDADIDQMIENLRLQRRTWNPVERGAQVGDLVALETWSQAGDERLPAEGVETGSSVLGSGVMFDQIEKGLEGLTKGEEKTLTVDFPAEWRVPQLAGKTVQVHVKAVEVSEPVLPAVDKDFIKSFGVKSGDAEQFRADIRTNLERELKGALMNRLRREVGEQLIAAYAHVEMPPRLVESEARSMLAQQVEQVRRSGRDPGQVPADAHQGFMDAAAKRVLVGLLVGEVARRNELRLESKRVSETLRLIASTYEEPEQVIEMYRNDPQLMNGLQSRVMEEQVIDWIAERAQHTEQSLSFQDAIRV.

In terms of domain architecture, PPIase FKBP-type spans 157 to 242 (GDLVALETWS…AVEVSEPVLP (86 aa)).

It belongs to the FKBP-type PPIase family. Tig subfamily.

The protein localises to the cytoplasm. It carries out the reaction [protein]-peptidylproline (omega=180) = [protein]-peptidylproline (omega=0). Its function is as follows. Involved in protein export. Acts as a chaperone by maintaining the newly synthesized protein in an open conformation. Functions as a peptidyl-prolyl cis-trans isomerase. The sequence is that of Trigger factor from Xanthomonas axonopodis pv. citri (strain 306).